The primary structure comprises 122 residues: Nuclear transport factor 2A (122 aa).

Methionine 1 is subject to N-acetylmethionine. The region spanning 6–119 (VAKAFVEHYY…YYVFNDIFRL (114 aa)) is the NTF2 domain.

Interacts with RAN1. In terms of tissue distribution, expressed in roots, stems, leaves and flowers, and, at low levels, in siliques.

The protein resides in the cytoplasm. The protein localises to the nucleus. It is found in the nucleus envelope. Its function is as follows. Facilitates protein transport into the nucleus. Interacts with various nucleoporins and with Ran-GDP. Could be part of a multicomponent system of cytosolic factors that assemble at the pore complex during nuclear import. In Arabidopsis thaliana (Mouse-ear cress), this protein is Nuclear transport factor 2A.